The chain runs to 156 residues: Ribonuclease pancreatic (156 aa).

The signal sequence occupies residues 1–28 (MALEKSLALLPLLVLVLLVLGWVQPSLG). Basic and acidic residues predominate over residues 33–43 (AKKFQRQHMDS). The interval 33–52 (AKKFQRQHMDSDGSPSSNPT) is disordered. Substrate is bound by residues Lys-35 and Arg-38. The active-site Proton acceptor is His-40. 4 cysteine pairs are disulfide-bonded: Cys-54–Cys-112, Cys-68–Cys-123, Cys-86–Cys-138, and Cys-93–Cys-100. The N-linked (GlcNAc...) asparagine glycan is linked to Asn-62. 69 to 73 (KPVNT) provides a ligand contact to substrate. Residue Asn-90 is glycosylated (N-linked (GlcNAc...) asparagine). Residues Lys-94 and Arg-113 each coordinate substrate. N-linked (GlcNAc...) asparagine glycosylation is present at Asn-116. His-147 acts as the Proton donor in catalysis.

Belongs to the pancreatic ribonuclease family. In terms of assembly, monomer. Interacts with and forms tight 1:1 complexes with RNH1. Dimerization of two such complexes may occur. Interaction with RNH1 inhibits this protein.

The protein resides in the secreted. The enzyme catalyses an [RNA] containing cytidine + H2O = an [RNA]-3'-cytidine-3'-phosphate + a 5'-hydroxy-ribonucleotide-3'-[RNA].. It carries out the reaction an [RNA] containing uridine + H2O = an [RNA]-3'-uridine-3'-phosphate + a 5'-hydroxy-ribonucleotide-3'-[RNA].. Endonuclease that catalyzes the cleavage of RNA on the 3' side of pyrimidine nucleotides. Acts on single-stranded and double-stranded RNA. This Ateles geoffroyi (Black-handed spider monkey) protein is Ribonuclease pancreatic (RNASE1).